We begin with the raw amino-acid sequence, 98 residues long: uncharacterized protein (98 aa).

2 helical membrane passes run 14–34 (FLVI…PVTA) and 41–61 (MTGA…ASII).

Its subcellular location is the cell membrane. This is an uncharacterized protein from Haemophilus influenzae (strain ATCC 51907 / DSM 11121 / KW20 / Rd).